Here is a 185-residue protein sequence, read N- to C-terminus: Large ribosomal subunit protein bL25 (185 aa).

The protein belongs to the bacterial ribosomal protein bL25 family. CTC subfamily. Part of the 50S ribosomal subunit; part of the 5S rRNA/L5/L18/L25 subcomplex. Contacts the 5S rRNA. Binds to the 5S rRNA independently of L5 and L18.

Functionally, this is one of the proteins that binds to the 5S RNA in the ribosome where it forms part of the central protuberance. This chain is Large ribosomal subunit protein bL25, found in Chlamydia abortus (strain DSM 27085 / S26/3) (Chlamydophila abortus).